The following is a 359-amino-acid chain: MKILNLIQPGVVTGNECQIIFELAKKKKFAIPAVNCIGTDSINAVLETASRVKSPVIIQFSYGGASFIAGYKRTSSKNPEDQAIQGSISGAQHVHLMSQYYQIPVILHTDHCSKEMLPWIDGLLEEGKKHYKNFGKPLFTSHMIDLSKEHLKENIAICSNYLKKIKKINMILEIELGCTGGEEDGIDNSNIDKKLLYTQPKDVNYAYKKLSKISTNFTIAASFGNVHGVYQPGNVNLKPNILKESQEYVSTKHNLKKLPLNLVFHGGSGSDLKEIHESIEYGIVKMNIDTDIQWASWKGVFNFYKKNKDFLQKQIGNKNGKNIPNKKYYDPRSWIRESQESMSKRLEKTFKDLNAFNIL.

Residue S61 participates in D-glyceraldehyde 3-phosphate binding. The Proton donor role is filled by D110. 4 residues coordinate Zn(2+): H111, D145, E175, and H227. Residue G228 participates in dihydroxyacetone phosphate binding. Residue H265 coordinates Zn(2+). Dihydroxyacetone phosphate-binding positions include 266-268 and 287-290; these read GGS and NIDT.

It belongs to the class II fructose-bisphosphate aldolase family. Zn(2+) serves as cofactor.

The catalysed reaction is beta-D-fructose 1,6-bisphosphate = D-glyceraldehyde 3-phosphate + dihydroxyacetone phosphate. It functions in the pathway carbohydrate degradation; glycolysis; D-glyceraldehyde 3-phosphate and glycerone phosphate from D-glucose: step 4/4. Catalyzes the aldol condensation of dihydroxyacetone phosphate (DHAP or glycerone-phosphate) with glyceraldehyde 3-phosphate (G3P) to form fructose 1,6-bisphosphate (FBP) in gluconeogenesis and the reverse reaction in glycolysis. This chain is Fructose-bisphosphate aldolase class 2 (fbaA), found in Buchnera aphidicola subsp. Schizaphis graminum (strain Sg).